A 330-amino-acid polypeptide reads, in one-letter code: Beta-hexosaminidase (330 aa).

Residues D62, R70, R133, and 163 to 164 (KH) contribute to the substrate site. The Proton donor/acceptor role is filled by H176. D246 (nucleophile) is an active-site residue.

Belongs to the glycosyl hydrolase 3 family. NagZ subfamily.

It localises to the cytoplasm. The catalysed reaction is Hydrolysis of terminal non-reducing N-acetyl-D-hexosamine residues in N-acetyl-beta-D-hexosaminides.. Its pathway is cell wall biogenesis; peptidoglycan recycling. Its function is as follows. Plays a role in peptidoglycan recycling by cleaving the terminal beta-1,4-linked N-acetylglucosamine (GlcNAc) from peptide-linked peptidoglycan fragments, giving rise to free GlcNAc, anhydro-N-acetylmuramic acid and anhydro-N-acetylmuramic acid-linked peptides. The polypeptide is Beta-hexosaminidase (Idiomarina loihiensis (strain ATCC BAA-735 / DSM 15497 / L2-TR)).